Consider the following 82-residue polypeptide: Immediate early response 3-interacting protein 1 (82 aa).

Transmembrane regions (helical) follow at residues 2–22 and 62–82; these read AFTL…IAVL and VMRV…LLFG.

It belongs to the YOS1 family.

Its subcellular location is the endoplasmic reticulum membrane. Functionally, regulator of endoplasmic reticulum secretion that acts as a key determinant of brain size. Required for secretion of extracellular matrix proteins. Required for correct brain development by depositing sufficient extracellular matrix proteins for tissue integrity and the proliferation of neural progenitors. Acts as a regulator of the unfolded protein response (UPR). The sequence is that of Immediate early response 3-interacting protein 1 from Mus musculus (Mouse).